Here is a 386-residue protein sequence, read N- to C-terminus: Succinate--CoA ligase [ADP-forming] subunit beta (386 aa).

Residues 9–243 (KQLFRKYSIP…PAEDDPAEAE (235 aa)) form the ATP-grasp domain. Residues lysine 45, 52-54 (GRG), glutamate 98, valine 101, and glutamate 106 each bind ATP. 2 residues coordinate Mg(2+): asparagine 198 and aspartate 212. Substrate is bound by residues asparagine 263 and 320–322 (GIL).

It belongs to the succinate/malate CoA ligase beta subunit family. As to quaternary structure, heterotetramer of two alpha and two beta subunits. Requires Mg(2+) as cofactor.

The enzyme catalyses succinate + ATP + CoA = succinyl-CoA + ADP + phosphate. It carries out the reaction GTP + succinate + CoA = succinyl-CoA + GDP + phosphate. It participates in carbohydrate metabolism; tricarboxylic acid cycle; succinate from succinyl-CoA (ligase route): step 1/1. Its function is as follows. Succinyl-CoA synthetase functions in the citric acid cycle (TCA), coupling the hydrolysis of succinyl-CoA to the synthesis of either ATP or GTP and thus represents the only step of substrate-level phosphorylation in the TCA. The beta subunit provides nucleotide specificity of the enzyme and binds the substrate succinate, while the binding sites for coenzyme A and phosphate are found in the alpha subunit. This is Succinate--CoA ligase [ADP-forming] subunit beta from Desulfotalea psychrophila (strain LSv54 / DSM 12343).